Reading from the N-terminus, the 214-residue chain is RNA pyrophosphohydrolase (214 aa).

Residues 6–149 (GFRPNVGIIL…KRDVYQLALT (144 aa)) form the Nudix hydrolase domain. The Nudix box motif lies at 38–59 (GGIKYGETPMQAMYRELHEETG).

The protein belongs to the Nudix hydrolase family. RppH subfamily. A divalent metal cation serves as cofactor.

Its function is as follows. Accelerates the degradation of transcripts by removing pyrophosphate from the 5'-end of triphosphorylated RNA, leading to a more labile monophosphorylated state that can stimulate subsequent ribonuclease cleavage. This is RNA pyrophosphohydrolase from Burkholderia cenocepacia (strain HI2424).